Reading from the N-terminus, the 911-residue chain is Protein translocase subunit SecA (911 aa).

ATP contacts are provided by residues Gln-87, 105-109 (GEGKT), and Asp-510. 4 residues coordinate Zn(2+): Cys-896, Cys-898, Cys-907, and His-908.

Belongs to the SecA family. In terms of assembly, monomer and homodimer. Part of the essential Sec protein translocation apparatus which comprises SecA, SecYEG and auxiliary proteins SecDF-YajC and YidC. Zn(2+) is required as a cofactor.

The protein resides in the cell inner membrane. It localises to the cytoplasm. The catalysed reaction is ATP + H2O + cellular proteinSide 1 = ADP + phosphate + cellular proteinSide 2.. Functionally, part of the Sec protein translocase complex. Interacts with the SecYEG preprotein conducting channel. Has a central role in coupling the hydrolysis of ATP to the transfer of proteins into and across the cell membrane, serving both as a receptor for the preprotein-SecB complex and as an ATP-driven molecular motor driving the stepwise translocation of polypeptide chains across the membrane. This chain is Protein translocase subunit SecA, found in Acinetobacter baumannii (strain SDF).